A 130-amino-acid chain; its full sequence is Prefoldin subunit alpha (130 aa).

The protein belongs to the prefoldin subunit alpha family. In terms of assembly, heterohexamer of two alpha and four beta subunits.

The protein localises to the cytoplasm. In terms of biological role, molecular chaperone capable of stabilizing a range of proteins. Seems to fulfill an ATP-independent, HSP70-like function in archaeal de novo protein folding. This chain is Prefoldin subunit alpha, found in Thermoplasma volcanium (strain ATCC 51530 / DSM 4299 / JCM 9571 / NBRC 15438 / GSS1).